Consider the following 560-residue polypeptide: Solute carrier family 22 member 6 (560 aa).

At 1–15 (MAFSDLLEQVGSTGR) the chain is on the cytoplasmic side. A helical transmembrane segment spans residues 16 to 36 (FQVLHVTLLSMPILMMASHNL). Topologically, residues 37-143 (LQNFVAAVPP…LVCDYRALKQ (107 aa)) are extracellular. Residues 144–164 (MSQTTYMGGVLVGAIVFGGLS) form a helical membrane-spanning segment. At 165–170 (DRFGRR) the chain is on the cytoplasmic side. The chain crosses the membrane as a helical span at residues 171-191 (VLLLISNLMMAIGGTCVAFST). Topologically, residues 192-201 (SFTMFCVFRV) are extracellular. Residues 202-222 (CCGMALSGLVLNSFSLIVEWI) form a helical membrane-spanning segment. Residues 223–228 (PTRVRT) are Cytoplasmic-facing. The helical transmembrane segment at 229–249 (VVGTGTGYCYTTGQLILAAVA) threads the bilayer. Over 250 to 256 (YCIRDWR) the chain is Extracellular. The helical transmembrane segment at 257–277 (WLTLAVSLPFYVSFLYSWWFL) threads the bilayer. Over 278 to 345 (ESARWLVLTK…DLLRTSTMRT (68 aa)) the chain is Cytoplasmic. The chain crosses the membrane as a helical span at residues 346 to 366 (ITICLSAVWFSTSFAYYGLSM). At 367-374 (DLQKFGVS) the chain is on the extracellular side. The chain crosses the membrane as a helical span at residues 375–395 (IYLIQIIFGAVDIPAKIIVTI). The Cytoplasmic portion of the chain corresponds to 396–406 (CMSMLGRRPSQ). A helical transmembrane segment spans residues 407 to 427 (CGALVLAGIMILINLLVPSDL). Residues 428-433 (QMLRTS) lie on the Extracellular side of the membrane. A helical membrane pass occupies residues 434-454 (LAVIGKGCLAASFNCCYLYAG). Topologically, residues 455 to 465 (ELYPTVIRQSG) are cytoplasmic. A helical membrane pass occupies residues 466-486 (MGWVSMMARFGAMVAPMVLLL). Residues 487 to 491 (GDDYP) are Extracellular-facing. Residues 492-512 (WIPGFIYGGAPIVSGIFAFFL) traverse the membrane as a helical segment. Topologically, residues 513-560 (PETLSQPLPDTIQDIDDRGLARTNSKRLPEKLDLAMKDPSCVLLKESV) are cytoplasmic.

Belongs to the major facilitator (TC 2.A.1) superfamily. Organic cation transporter (TC 2.A.1.19) family. In terms of processing, glycosylated. Glycosylation is necessary for proper targeting of the transporter to the plasma membrane.

The protein localises to the cell membrane. The protein resides in the basolateral cell membrane. Its subcellular location is the basal cell membrane. Involved in the renal elimination of endogenous and exogenous organic anions. Functions as organic anion exchanger when the uptake of one molecule of organic anion is coupled with an efflux of one molecule of endogenous dicarboxylic acid (glutarate, ketoglutarate, etc). Mediates the sodium-independent uptake of p-aminohippurate (PAH), 2,3-dimercapto-1-propanesulfonic acid (DMPS), cidofovir, adefovir, 9-(2-phosphonylmethoxyethyl) guanine (PMEG), 9-(2-phosphonylmethoxyethyl) diaminopurine (PMEDAP), ochratoxin (OTA), acyclovir (ACV), 3'-azido-3-'deoxythymidine (AZT), cimetidine (CMD), 2,4-dichloro-phenoxyacetate (2,4-D), hippurate (HA), indoleacetate (IA), indoxyl sulfate (IS) and 3-carboxy-4-methyl-5-propyl-2-furanpropionate (CMPF) and edaravone sulfate. PAH uptake is inhibited by p-chloromercuribenzenesulphonate (PCMBS), diethyl pyrocarbonate (DEPC), indomethacin, sulindac, diclofenac, carprofen, okadaic acid, benzothiazolylcysteine (BTC), S-chlorotrifluoroethylcysteine (CTFC), cysteine S-conjugates S-dichlorovinylcysteine (DCVC), furosemide, steviol, phorbol 12-myristate 13-acetate (PMA), calcium ionophore A23187, benzylpenicillin, bumetamide, losartan, probenecid, phenol red, urate, glutarate and alpha-ketoglutarate. This is Solute carrier family 22 member 6 (slc22a6) from Danio rerio (Zebrafish).